Reading from the N-terminus, the 292-residue chain is 2-hydroxy-3-oxopropionate reductase (292 aa).

Residues 4 to 18 (GFIG…MAIN) and S94 each bind NAD(+). The active site involves K169. Residue K237 coordinates NAD(+).

The protein belongs to the HIBADH-related family.

It carries out the reaction (R)-glycerate + NADP(+) = 2-hydroxy-3-oxopropanoate + NADPH + H(+). The catalysed reaction is (R)-glycerate + NAD(+) = 2-hydroxy-3-oxopropanoate + NADH + H(+). It participates in organic acid metabolism; glycolate degradation; 3-phospho-D-glycerate from glycolate: step 3/4. In Escherichia coli (strain K12), this protein is 2-hydroxy-3-oxopropionate reductase (glxR).